Here is a 421-residue protein sequence, read N- to C-terminus: Probable pectate lyase C (421 aa).

The signal sequence occupies residues 1 to 19; that stretch reads MQPLHTLLALLPLCRSTTA. N-linked (GlcNAc...) asparagine glycosylation is found at Asn-164 and Asn-201. Residue Arg-204 is part of the active site. The region spanning 257–292 is the EF-hand domain; the sequence is NENFHGYVENNYYDPDQDGTLNGNELGVSSSNYGGM. Positions 270, 272, 274, 276, and 281 each coordinate Ca(2+). A disordered region spans residues 353-376; that stretch reads DFGGVGDLDGGETPTDTDGDGIPD. Acidic residues predominate over residues 367 to 376; the sequence is TDTDGDGIPD.

It belongs to the polysaccharide lyase 1 family. Ca(2+) serves as cofactor.

It localises to the secreted. It carries out the reaction Eliminative cleavage of (1-&gt;4)-alpha-D-galacturonan to give oligosaccharides with 4-deoxy-alpha-D-galact-4-enuronosyl groups at their non-reducing ends.. In terms of biological role, pectinolytic enzyme consist of four classes of enzymes: pectin lyase, polygalacturonase, pectin methylesterase and rhamnogalacturonase. Among pectinolytic enzymes, pectin lyase is the most important in depolymerization of pectin, since it cleaves internal glycosidic bonds of highly methylated pectins. Favors pectate, the anion, over pectin, the methyl ester. The protein is Probable pectate lyase C (plyC) of Emericella nidulans (strain FGSC A4 / ATCC 38163 / CBS 112.46 / NRRL 194 / M139) (Aspergillus nidulans).